Here is a 471-residue protein sequence, read N- to C-terminus: Secretogranin-3 (471 aa).

An N-terminal signal peptide occupies residues 1 to 22 (MGFLWTGSWILVLVLNSGPIQA). 4 disordered regions span residues 24-73 (PKPE…SNFS), 92-145 (KAKQ…HQLD), 208-231 (ANNY…KIPE), and 345-405 (KLEK…DEAK). The segment covering 28 to 45 (GSQDKSLHNRELSAERPL) has biased composition (basic and acidic residues). S40 carries the phosphoserine modification. A glycan (O-linked (Xyl...) (chondroitin sulfate) serine) is linked at S40. Residues 62-73 (PSESKPSESNFS) show a composition bias toward low complexity. Basic and acidic residues-rich tracts occupy residues 106–142 (LNVD…DGLH), 214–231 (APEK…KIPE), 345–355 (KLEKNTTDSKS), and 363–405 (EKSH…DEAK). S365 is modified (phosphoserine).

In terms of assembly, interacts with CHGA. Interacts with secretogranin II/SCG2. Interacts (via C-terminus) with CPE. In terms of tissue distribution, expression restricted to the brain and pituitary gland. Not detected in the adrenal gland.

It is found in the cytoplasmic vesicle. It localises to the secretory vesicle. The protein localises to the secretory vesicle membrane. Its subcellular location is the secreted. Functionally, member of the granin protein family that regulates the biogenesis of secretory granules. Acts as a sorting receptor for intragranular proteins including chromogranin A/CHGA. May also play a role in angiogenesis. Promotes endothelial proliferation, migration and tube formation through MEK/ERK signaling pathway. In Rattus norvegicus (Rat), this protein is Secretogranin-3 (Scg3).